We begin with the raw amino-acid sequence, 507 residues long: Phosphoprotein (507 aa).

Positions 1–48 are interaction with N0; that stretch reads MAEEQARHVKNGLECIRALKAEPIGSLAIGEAMAAWSEISDNPGQEQA. Disordered stretches follow at residues 40–98, 134–174, 201–231, and 251–305; these read SDNP…FPSR, GLDG…APIS, NNFP…IKKG, and ATQC…KGGD. A Phosphoserine modification is found at Ser86. Positions 134–145 are enriched in low complexity; sequence GLDGDSTLSGGD. The span at 146–160 shows a compositional bias: acidic residues; it reads NESENSDVDIGEPDT. Phosphoserine is present on Ser151. The segment covering 260-270 has biased composition (low complexity); that stretch reads SEPSGPGAPAG. The span at 279 to 300 shows a compositional bias: polar residues; it reads AALTQEWTPESGTTISPRSQNK. Residues 304–376 are multimerization; it reads GDYYDDELFS…LSSIMIAIPG (73 aa). Interaction with the L polymerase stretches follow at residues 361–377 and 396–410; these read STLE…IPGL and PIIG…AEVL. A x domain (XD) region spans residues 457-507; that stretch reads GPASRSVIRSIIKSSRIEEDRKRYLMTLLDDIKGANDLAKFHQMLMKIIMK. The interval 459 to 507 is interaction with the nucleocapsid (N-RNA); the sequence is ASRSVIRSIIKSSRIEEDRKRYLMTLLDDIKGANDLAKFHQMLMKIIMK.

Belongs to the morbillivirus P protein family. As to quaternary structure, homotetramer. Interacts (via multimerization domain and XD domain) with polymerase L; this interaction forms the polymerase L-P complex. Interacts (via N-terminus) with N0 (via Ncore); this interaction allows P to chaperon N0 to avoid N polymerization and non-specific RNA binding before encapsidation. Interacts (via C-terminus) with N-RNA template (via Ntail); this interaction maintains the P/L complex anchored to the nucleocapsid template during the sequential transcription. Interacts (via C-terminus) with protein C this interaction allows C to associate with the ribonucleocapsid. Post-translationally, phosphorylation on serines by host CK2 is necessary for the formation of viral factories.

Functionally, essential cofactor of the RNA polymerase L that plays a central role in the transcription and replication by forming the polymerase complex with RNA polymerase L and recruiting L to the genomic N-RNA template for RNA synthesis. Also plays a central role in the encapsidation of nascent RNA chains by forming the encapsidation complex with the nucleocapsid protein N (N-P complex). Acts as a chaperone for newly synthesized free N protein, so-called N0, allowing encapsidation of nascent RNA chains during replication. The nucleoprotein protein N prevents excessive phosphorylation of P, which leads to down-regulation of viral transcription/ replication. Participates, together with N, in the formation of viral factories (viroplasms), which are large inclusions in the host cytoplasm where replication takes place. This chain is Phosphoprotein (P/V), found in Homo sapiens (Human).